The following is a 261-amino-acid chain: CD40 ligand (261 aa).

Residues 1-22 lie on the Cytoplasmic side of the membrane; the sequence is MIETYNQPSPRSAATGLPVRMK. Residues 23 to 43 traverse the membrane as a helical; Signal-anchor for type II membrane protein segment; that stretch reads IFMYLLTIFLITQMIGSALFA. The Extracellular portion of the chain corresponds to 44 to 261; it reads VYLHRRLDKI…GFTSFGLLKL (218 aa). Residues 122–261 form the THD domain; it reads IAAHVISEAS…GFTSFGLLKL (140 aa). Cys178 and Cys218 are disulfide-bonded. An N-linked (GlcNAc...) asparagine glycan is attached at Asn240.

The protein belongs to the tumor necrosis factor family. Homotrimer. Interacts with CD28. CD40 ligand, soluble form: Exists as either a monomer or a homotrimer. Forms a ternary complex between CD40 and integrins for CD40-CD40LG signaling. In terms of processing, the soluble form derives from the membrane form by proteolytic processing.

It is found in the cell membrane. Its subcellular location is the cell surface. The protein localises to the secreted. In terms of biological role, cytokine that acts as a ligand to CD40/TNFRSF5. Costimulates T-cell proliferation and cytokine production. Its cross-linking on T-cells generates a costimulatory signal which enhances the production of IL4 and IL10 in conjunction with the TCR/CD3 ligation and CD28 costimulation. Induces the activation of NF-kappa-B. Induces the activation of kinases MAPK8 and PAK2 in T-cells. Mediates B-cell proliferation in the absence of co-stimulus as well as IgE production in the presence of IL4. Involved in immunoglobulin class switching. Acts as a ligand for integrins, specifically ITGA5:ITGB1 and ITGAV:ITGB3; both integrins and the CD40 receptor are required for activation of CD40-CD40LG signaling, which have cell-type dependent effects, such as B-cell activation, NF-kappa-B signaling and anti-apoptotic signaling. This chain is CD40 ligand (CD40LG), found in Cercocebus atys (Sooty mangabey).